A 623-amino-acid chain; its full sequence is Chaperone protein dnaK (623 aa).

Residues 598–623 (TPDAGAEGGAAPSQDDAIETDFSTEK) are disordered.

Belongs to the heat shock protein 70 family.

The protein resides in the plastid. It is found in the chloroplast. Acts as a chaperone. In Emiliania huxleyi (Coccolithophore), this protein is Chaperone protein dnaK.